We begin with the raw amino-acid sequence, 326 residues long: DNA-binding death effector domain-containing protein 2 (326 aa).

A DED domain is found at 25–104 (SLHRMFEVVG…RHDLLPHLAR (80 aa)). A Nuclear localization signal motif is present at residues 104–109 (RKRRRP). Residues 104-194 (RKRRRPVSPE…PARPSSEGKV (91 aa)) are disordered. The segment covering 136–146 (SSSSANSQQGQ) has biased composition (low complexity). The Bipartite nuclear localization signal motif lies at 155–173 (KRQRRSRGRPSGGARRRRR). Residues 155 to 174 (KRQRRSRGRPSGGARRRRRG) show a composition bias toward basic residues. Low complexity predominate over residues 175–191 (APAAPQQQSEPARPSSE).

In terms of assembly, interacts with CASP8, CASP10 and GTF3C3. Homodimerizes and heterodimerizes with DEDD. As to expression, expressed in most tissues. High levels were found in liver, kidney, heart, ovary, spleen, testes, skeletal muscle and peripheral blood leukocytes. Expression was absent or low in colon and small intestine. Expression is relatively high in the tumor cell lines chronic myologenous leukemia K-562 and the colorectal adenocarcinoma SW480. Expression is moderate in the cervical carcinoma HeLa, the Burkitt's lymphoma Raji, the lung carcinoma A-549, and the melanoma G-361. In contrast, two leukemia cell lines, HL-60 (promyelocytic leukemia) and MOLT-4 (lymphoblastic leukemia), show relatively low levels.

It is found in the nucleus. The protein resides in the nucleolus. In terms of biological role, may play a critical role in death receptor-induced apoptosis and may target CASP8 and CASP10 to the nucleus. May regulate degradation of intermediate filaments during apoptosis. May play a role in the general transcription machinery in the nucleus and might be an important regulator of the activity of GTF3C3. This chain is DNA-binding death effector domain-containing protein 2 (DEDD2), found in Homo sapiens (Human).